A 213-amino-acid polypeptide reads, in one-letter code: Kynurenine formamidase (213 aa).

A substrate-binding site is contributed by Trp18. His48, His52, and Asp54 together coordinate Zn(2+). Residue His58 is the Proton donor/acceptor of the active site. His160 and Glu172 together coordinate Zn(2+).

It belongs to the Cyclase 1 superfamily. KynB family. In terms of assembly, homodimer. Zn(2+) serves as cofactor.

It carries out the reaction N-formyl-L-kynurenine + H2O = L-kynurenine + formate + H(+). The protein operates within amino-acid degradation; L-tryptophan degradation via kynurenine pathway; L-kynurenine from L-tryptophan: step 2/2. Functionally, catalyzes the hydrolysis of N-formyl-L-kynurenine to L-kynurenine, the second step in the kynurenine pathway of tryptophan degradation. In Burkholderia ambifaria (strain MC40-6), this protein is Kynurenine formamidase.